The sequence spans 283 residues: Thymidylate synthase (283 aa).

Residue arginine 22 participates in dUMP binding. Cysteine 160 (nucleophile) is an active-site residue. DUMP contacts are provided by residues 180–183, asparagine 191, and 221–223; these read RSCD and HIY. Aspartate 183 serves as a coordination point for (6R)-5,10-methylene-5,6,7,8-tetrahydrofolate. Residue serine 282 participates in (6R)-5,10-methylene-5,6,7,8-tetrahydrofolate binding.

Belongs to the thymidylate synthase family. Bacterial-type ThyA subfamily. In terms of assembly, homodimer.

Its subcellular location is the cytoplasm. It carries out the reaction dUMP + (6R)-5,10-methylene-5,6,7,8-tetrahydrofolate = 7,8-dihydrofolate + dTMP. It participates in pyrimidine metabolism; dTTP biosynthesis. In terms of biological role, catalyzes the reductive methylation of 2'-deoxyuridine-5'-monophosphate (dUMP) to 2'-deoxythymidine-5'-monophosphate (dTMP) while utilizing 5,10-methylenetetrahydrofolate (mTHF) as the methyl donor and reductant in the reaction, yielding dihydrofolate (DHF) as a by-product. This enzymatic reaction provides an intracellular de novo source of dTMP, an essential precursor for DNA biosynthesis. In Vibrio cholerae serotype O1 (strain ATCC 39315 / El Tor Inaba N16961), this protein is Thymidylate synthase.